Consider the following 153-residue polypeptide: 6,7-dimethyl-8-ribityllumazine synthase (153 aa).

Residues phenylalanine 22, 56 to 58, and 80 to 82 contribute to the 5-amino-6-(D-ribitylamino)uracil site; these read AFE and TVI. Position 85–86 (85–86) interacts with (2S)-2-hydroxy-3-oxobutyl phosphate; the sequence is ST. Histidine 88 functions as the Proton donor in the catalytic mechanism. Phenylalanine 113 contacts 5-amino-6-(D-ribitylamino)uracil. Residue arginine 127 coordinates (2S)-2-hydroxy-3-oxobutyl phosphate.

It belongs to the DMRL synthase family. As to quaternary structure, forms an icosahedral capsid composed of 60 subunits, arranged as a dodecamer of pentamers.

It carries out the reaction (2S)-2-hydroxy-3-oxobutyl phosphate + 5-amino-6-(D-ribitylamino)uracil = 6,7-dimethyl-8-(1-D-ribityl)lumazine + phosphate + 2 H2O + H(+). It functions in the pathway cofactor biosynthesis; riboflavin biosynthesis; riboflavin from 2-hydroxy-3-oxobutyl phosphate and 5-amino-6-(D-ribitylamino)uracil: step 1/2. Its function is as follows. Catalyzes the formation of 6,7-dimethyl-8-ribityllumazine by condensation of 5-amino-6-(D-ribitylamino)uracil with 3,4-dihydroxy-2-butanone 4-phosphate. This is the penultimate step in the biosynthesis of riboflavin. The protein is 6,7-dimethyl-8-ribityllumazine synthase of Actinobacillus pleuropneumoniae serotype 3 (strain JL03).